Consider the following 155-residue polypeptide: Small ribosomal subunit protein uS7 (155 aa).

It belongs to the universal ribosomal protein uS7 family. As to quaternary structure, part of the 30S ribosomal subunit. Contacts proteins S9 and S11.

One of the primary rRNA binding proteins, it binds directly to 16S rRNA where it nucleates assembly of the head domain of the 30S subunit. Is located at the subunit interface close to the decoding center, probably blocks exit of the E-site tRNA. In Mycoplasmoides gallisepticum (strain R(low / passage 15 / clone 2)) (Mycoplasma gallisepticum), this protein is Small ribosomal subunit protein uS7.